Here is an 866-residue protein sequence, read N- to C-terminus: Transcription factor E2F8 (866 aa).

Phosphoserine is present on residues serine 71 and serine 102. 2 DNA-binding regions span residues 113–182 (RKEK…TWHG) and 261–347 (RKDK…KWTG). 3 disordered regions span residues 409-429 (RKINSAPSSPIKTHKAESTQN), 532-632 (TITP…STTL), and 794-837 (TNGQ…GSPC). Residues serine 413 and serine 417 each carry the phosphoserine modification. A compositionally biased stretch (polar residues) spans 543 to 552 (VCPTTSSNAM). Composition is skewed to basic and acidic residues over residues 588-603 (QGAKNREREPAREKGS) and 612-624 (SGSKKKFKEDQKA). The span at 794–805 (TNGQSFAGTGAQ) shows a compositional bias: polar residues. Over residues 825 to 834 (TPGGPTKPTG) the composition is skewed to low complexity.

The protein belongs to the E2F/DP family. In terms of assembly, homodimer and heterodimer: mainly forms homodimers and, to a lesser extent, heterodimers with E2F8. Dimerization is important for DNA-binding. Interacts with HIF1A.

It is found in the nucleus. Its function is as follows. Atypical E2F transcription factor that participates in various processes such as angiogenesis and polyploidization of specialized cells. Mainly acts as a transcription repressor that binds DNA independently of DP proteins and specifically recognizes the E2 recognition site 5'-TTTC[CG]CGC-3'. Directly represses transcription of classical E2F transcription factors such as E2F1: component of a feedback loop in S phase by repressing the expression of E2F1, thereby preventing p53/TP53-dependent apoptosis. Plays a key role in polyploidization of cells in placenta and liver by regulating the endocycle, probably by repressing genes promoting cytokinesis and antagonizing action of classical E2F proteins (E2F1, E2F2 and/or E2F3). Required for placental development by promoting polyploidization of trophoblast giant cells. Acts as a promoter of sprouting angiogenesis, possibly by acting as a transcription activator: associates with HIF1A, recognizes and binds the VEGFA promoter, which is different from canonical E2 recognition site, and activates expression of the VEGFA gene. The chain is Transcription factor E2F8 (E2F8) from Bos taurus (Bovine).